Here is a 520-residue protein sequence, read N- to C-terminus: Zinc finger and BTB domain-containing protein 18 (520 aa).

Residues 24–91 enclose the BTB domain; sequence CDCTVLVGDA…MYEGILQFKG (68 aa). Residues 121-140 are disordered; the sequence is ATTDSTKKEEDTSSFSDKVE. 4 consecutive C2H2-type zinc fingers follow at residues 368-390, 408-430, 436-458, and 464-487; these read FMCP…LSTH, PTCS…ERTH, YTCT…AVVH, and HACK…RKFH.

This sequence belongs to the krueppel C2H2-type zinc-finger protein family. ZBTB18 subfamily.

The protein localises to the nucleus. Functionally, transcriptional repressor that plays a role in various developmental processes. Specifically binds the consensus DNA sequence 5'-[AC]ACATCTG[GT][AC]-3' which contains the E box core, and acts by recruiting chromatin remodeling multiprotein complexes. In Xenopus laevis (African clawed frog), this protein is Zinc finger and BTB domain-containing protein 18 (zbtb18).